The sequence spans 969 residues: Translation initiation factor IF-2 (969 aa).

The interval 50-370 is disordered; sequence SFASKSAPAN…QAPSVGGVRL (321 aa). Residues 54–76 are compositionally biased toward low complexity; it reads KSAPANGAKPGPAASARPGAKPT. Over residues 77 to 87 the composition is skewed to pro residues; sequence PGGPRPGPRTP. The span at 88 to 102 shows a compositional bias: low complexity; sequence APAASAPQAPAEQTA. Pro residues predominate over residues 112-124; that stretch reads AVKPGPAPTPARP. A compositionally biased stretch (low complexity) spans 125-164; the sequence is AAPEAPAAKAAPEAPAQRPTPGGPRPGQQQQRPGAPAQGG. Residues 240-267 are compositionally biased toward pro residues; sequence PGGPRPSPGSMPPRPNPGAMPQRTPRPG. Over residues 269–340 the composition is skewed to gly residues; sequence SAGGRPGRPG…GAAGAFGRPG (72 aa). The span at 344 to 353 shows a compositional bias: basic residues; that stretch reads RRGRKSKRQK. The 172-residue stretch at 465-636 folds into the tr-type G domain; the sequence is VRPPVVTVMG…AVLLTADAAL (172 aa). The G1 stretch occupies residues 474–481; it reads GHVDHGKT. Residue 474–481 coordinates GTP; the sequence is GHVDHGKT. Residues 499–503 are G2; that stretch reads GITQH. The G3 stretch occupies residues 524-527; sequence DTPG. GTP is bound by residues 524–528 and 578–581; these read DTPGH and NKID. A G4 region spans residues 578–581; the sequence is NKID. Residues 614–616 form a G5 region; sequence SAK.

The protein belongs to the TRAFAC class translation factor GTPase superfamily. Classic translation factor GTPase family. IF-2 subfamily.

It localises to the cytoplasm. Functionally, one of the essential components for the initiation of protein synthesis. Protects formylmethionyl-tRNA from spontaneous hydrolysis and promotes its binding to the 30S ribosomal subunits. Also involved in the hydrolysis of GTP during the formation of the 70S ribosomal complex. This chain is Translation initiation factor IF-2, found in Nocardia farcinica (strain IFM 10152).